A 3739-amino-acid polypeptide reads, in one-letter code: Pikromycin polyketide synthase component PikAII (3739 aa).

The Ketosynthase family 3 (KS3) 1 domain occupies 35 to 463; that stretch reads GEPVAIVGMA…GTNAHVVLEE (429 aa). Module regions lie at residues 38-1517 and 1542-3642; these read VAIV…EFLL and VAIV…GHLL. Cysteine 208 functions as the Acyl-thioester intermediate; for beta-ketoacyl synthase 1 activity in the catalytic mechanism. Active-site for beta-ketoacyl synthase 1 activity residues include histidine 343 and histidine 383. Residues 572-877 form an acyltransferase 1 region; it reads FVFPGQGTQW…ERLVTSLAEA (306 aa). Residue serine 662 is the Acyl-ester intermediate; for acyltransferase 1 activity of the active site. A C2-type beta-ketoacyl reductase 1 region spans residues 1150-1343; it reads GTVLVTGAEE…VTSVAWSPWE (194 aa). Tyrosine 1313 serves as the catalytic For C2-type beta-ketoacyl reductase 1 and probable racemase activities. In terms of domain architecture, Carrier 1 spans 1445 to 1520; that stretch reads RRMQELVREH…TLAEFLLAEI (76 aa). O-(pantetheine 4'-phosphoryl)serine is present on serine 1480. Positions 1539-1967 constitute a Ketosynthase family 3 (KS3) 2 domain; the sequence is DEPVAIVGMA…GTNAHIVLEE (429 aa). The active-site Acyl-thioester intermediate; for beta-ketoacyl synthase 2 activity is the cysteine 1712. Residues histidine 1847 and histidine 1887 each act as for beta-ketoacyl synthase 2 activity in the active site. The acyltransferase 2 stretch occupies residues 2069-2374; the sequence is FVFPGQGTQW…HRLTTSLAEA (306 aa). Serine 2159 acts as the Acyl-ester intermediate; for acyltransferase 2 activity in catalysis. Residues 2428–2553 are N-terminal hotdog fold; that stretch reads HPLLGAAVAL…GVLAARADRT (126 aa). A dehydratase region spans residues 2428 to 2703; sequence HPLLGAAVAL…LTVLPVDPAQ (276 aa). The 278-residue stretch at 2428-2705 folds into the PKS/mFAS DH domain; the sequence is HPLLGAAVAL…VLPVDPAQLA (278 aa). Catalysis depends on histidine 2460, which acts as the Proton acceptor; for dehydratase activity. The C-terminal hotdog fold stretch occupies residues 2567–2705; sequence AEPVDVDGLY…VLPVDPAQLA (139 aa). Aspartate 2629 (proton donor; for dehydratase activity) is an active-site residue. The enoyl reductase stretch occupies residues 2959–3267; the sequence is GSLESLTAAP…QARHTGKVVL (309 aa). The active-site For enoyl reductase activity is the tyrosine 3005. Residues 3092-3109, 3285-3288, 3309-3312, 3338-3339, lysine 3388, and 3412-3413 contribute to the NADP(+) site; these read LLVH…VQLA, TGAL, SRRG, DV, and FS. The beta-ketoacyl reductase 2 stretch occupies residues 3277–3458; it reads GTVLLTGGTG…LSLGWGLWAE (182 aa). The active-site For beta-ketoacyl reductase 2 activity is tyrosine 3427. Positions 3570 to 3645 constitute a Carrier 2 domain; sequence AHLRDLVRTH…ELAGHLLDEL (76 aa). Position 3605 is an O-(pantetheine 4'-phosphoryl)serine (serine 3605).

In terms of assembly, homodimer. Pikromycin PKS consists of a combination of multimodular (PikAI and PikAII) and monomodular (PikAIII and PikAIV) polypeptides each coding for a functional synthase subunit which participates in 1 (monomodular) or 2 (multimodular) of the six FAS-like elongation steps required for formation of the polyketide. Module 1, 2, 3, 4, 5, and 6 participating in biosynthesis steps 1, 2, 3, 4, 5, and 6, respectively. Pantetheine 4'-phosphate is required as a cofactor.

The enzyme catalyses 5 (S)-methylmalonyl-CoA + malonyl-CoA + 5 NADPH + 11 H(+) = 10-deoxymethynolide + 6 CO2 + 5 NADP(+) + 6 CoA + 2 H2O. The catalysed reaction is 6 (S)-methylmalonyl-CoA + malonyl-CoA + 5 NADPH + 12 H(+) = narbonolide + 7 CO2 + 5 NADP(+) + 7 CoA + 2 H2O. It functions in the pathway antibiotic biosynthesis. In terms of biological role, involved in the biosynthesis of 12- and 14-membered ring macrolactone antibiotics such as methymycin/neomethymycin and pikromycin/narbomycin, respectively. Component of the pikromycin PKS which catalyzes the biosynthesis of both precursors 10-deoxymethynolide (12-membered ring macrolactone) and narbonolide (14-membered ring macrolactone). Chain elongation through PikAI, PikAII and PikAIII followed by thioesterase catalyzed termination results in the production of 10-deoxymethynolide, while continued elongation through PikAIV, followed by thioesterase (TE) catalyzed cyclization results in the biosynthesis of the narbonolide. This is Pikromycin polyketide synthase component PikAII from Streptomyces venezuelae.